Here is a 278-residue protein sequence, read N- to C-terminus: Large ribosomal subunit protein uL2 (278 aa).

Positions 201-278 (HGNINDGKAG…IMRSRHQRKK (78 aa)) are disordered. Basic residues predominate over residues 210-221 (GRSRWRGKRPHV).

The protein belongs to the universal ribosomal protein uL2 family. Part of the 50S ribosomal subunit. Forms a bridge to the 30S subunit in the 70S ribosome.

Functionally, one of the primary rRNA binding proteins. Required for association of the 30S and 50S subunits to form the 70S ribosome, for tRNA binding and peptide bond formation. It has been suggested to have peptidyltransferase activity; this is somewhat controversial. Makes several contacts with the 16S rRNA in the 70S ribosome. The sequence is that of Large ribosomal subunit protein uL2 from Sinorhizobium fredii (strain NBRC 101917 / NGR234).